A 360-amino-acid polypeptide reads, in one-letter code: MTATLERRESFSLWERFCSWITSTENRLYIGWFGVLMIPTLLTATSCYIIAFIAAPPVDIDGIREPVAGSLMYGNNIITGAVIPSSNAIGVHFYPIWEAASLDEWLYNGGPYQLIVLHFLLGVASYMGREWELSYRLGMRPWIFVAFSAPVAAASAVFLVYPIGQGSFSDGMPLGISGTFNFMLVFQAEHNILMHPFHMAGVAGVFGGSLFSAMHGSLVTSSLIRETSEIESANYGYKFGQEEETYNIVAAHGYFGRLIFQYASFNNSRALHFFLAAWPVVGIWLTALGVSTMAFNLNGFNFNQSVVDSQGRVINTWADIINRADLGMEVMHERNAHNFPLDLASNEVLPVAVNAPAVNG.

3 helical membrane passes run 29–46 (YIGWFGVLMIPTLLTATS), 118–133 (HFLLGVASYMGREWEL), and 142–156 (WIFVAFSAPVAAASA). H118 lines the chlorophyll a pocket. Pheophytin a is bound at residue Y126. [CaMn4O5] cluster contacts are provided by D170 and E189. A helical membrane pass occupies residues 197 to 218 (FHMAGVAGVFGGSLFSAMHGSL). H198 contacts chlorophyll a. Residues H215 and 264–265 (SF) contribute to the a quinone site. H215 lines the Fe cation pocket. Residue H272 coordinates Fe cation. Residues 274–288 (FLAAWPVVGIWLTAL) form a helical membrane-spanning segment. Residues H332, E333, D342, and A344 each contribute to the [CaMn4O5] cluster site. Positions 345 to 360 (SNEVLPVAVNAPAVNG) are excised as a propeptide.

The protein belongs to the reaction center PufL/M/PsbA/D family. As to quaternary structure, PSII is composed of 1 copy each of membrane proteins PsbA, PsbB, PsbC, PsbD, PsbE, PsbF, PsbH, PsbI, PsbJ, PsbK, PsbL, PsbM, PsbT, PsbX, PsbY, PsbZ, Psb30/Ycf12, at least 3 peripheral proteins of the oxygen-evolving complex and a large number of cofactors. It forms dimeric complexes. It depends on The D1/D2 heterodimer binds P680, chlorophylls that are the primary electron donor of PSII, and subsequent electron acceptors. It shares a non-heme iron and each subunit binds pheophytin, quinone, additional chlorophylls, carotenoids and lipids. D1 provides most of the ligands for the Mn4-Ca-O5 cluster of the oxygen-evolving complex (OEC). There is also a Cl(-1) ion associated with D1 and D2, which is required for oxygen evolution. The PSII complex binds additional chlorophylls, carotenoids and specific lipids. as a cofactor. Post-translationally, tyr-161 forms a radical intermediate that is referred to as redox-active TyrZ, YZ or Y-Z. C-terminally processed by CTPA; processing is essential to allow assembly of the oxygen-evolving complex and thus photosynthetic growth.

It localises to the plastid. It is found in the chloroplast thylakoid membrane. The enzyme catalyses 2 a plastoquinone + 4 hnu + 2 H2O = 2 a plastoquinol + O2. Functionally, photosystem II (PSII) is a light-driven water:plastoquinone oxidoreductase that uses light energy to abstract electrons from H(2)O, generating O(2) and a proton gradient subsequently used for ATP formation. It consists of a core antenna complex that captures photons, and an electron transfer chain that converts photonic excitation into a charge separation. The D1/D2 (PsbA/PsbD) reaction center heterodimer binds P680, the primary electron donor of PSII as well as several subsequent electron acceptors. In Heterosigma akashiwo (Chromophytic alga), this protein is Photosystem II protein D1.